The following is a 675-amino-acid chain: TOM1-like protein 9 (675 aa).

The 130-residue stretch at 9–138 (ATSEMLIGPD…ELLRAGAVFP (130 aa)) folds into the VHS domain. 5 disordered regions span residues 144 to 181 (SAPVFTPPQTQPLTSYPPNLRNAGPGNDVPEPSAEPEF), 270 to 322 (LPGT…QLAL), 371 to 524 (FSDN…YAQM), 542 to 561 (QNGVYMPNQPNQALGSGYQP), and 622 to 675 (RDQT…AGTM). The region spanning 180-268 (EFPTLSLSEI…VLTNYEAIAS (89 aa)) is the GAT domain. Composition is skewed to polar residues over residues 299 to 317 (GDSSNQANGATSSSGNGVL) and 372 to 435 (SDNT…GQGV). Over residues 436 to 451 (SSPWSSQPAQQPVQPS) the composition is skewed to low complexity. Polar residues-rich tracts occupy residues 470-481 (QDYSPSAESGSP) and 488-524 (PTQTAFTHAQPVNNNNPYPQIPQTGPPVNNNSPYAQM). Over residues 646 to 661 (NKPEDKLFGDLVDISK) the composition is skewed to basic and acidic residues.

The protein belongs to the TOM1 family. As to quaternary structure, interacts with ELC/VPS23A and ELCL/VPS23B. As to expression, ubiquitously expressed.

The protein localises to the cytoplasm. Its subcellular location is the membrane. Functionally, might contribute to the loading of the ESCRT machinery. This is TOM1-like protein 9 from Arabidopsis thaliana (Mouse-ear cress).